We begin with the raw amino-acid sequence, 565 residues long: Periplasmic trehalase (565 aa).

Positions 1–30 (MKSPAPSRPQKMALIPACIFLCFAALSVQA) are cleaved as a signal peptide. Substrate-binding positions include Arg-152, 159 to 160 (WD), Asn-196, 205 to 207 (RSQ), 277 to 279 (RPE), and Gly-310. Residues Asp-312 and Glu-496 each act as proton donor/acceptor in the active site. Glu-511 provides a ligand contact to substrate. Residues 540–565 (DNVPATHPTVKSATTQPSTKEAQPTP) are disordered. Positions 548–565 (TVKSATTQPSTKEAQPTP) are enriched in polar residues.

This sequence belongs to the glycosyl hydrolase 37 family. Monomer.

It localises to the periplasm. The enzyme catalyses alpha,alpha-trehalose + H2O = alpha-D-glucose + beta-D-glucose. Functionally, provides the cells with the ability to utilize trehalose at high osmolarity by splitting it into glucose molecules that can subsequently be taken up by the phosphotransferase-mediated uptake system. The protein is Periplasmic trehalase of Shigella flexneri.